A 160-amino-acid chain; its full sequence is Sodium/proline symporter (160 aa).

2 consecutive transmembrane segments (helical) span residues 6–26 (PMLV…FIAW) and 68–88 (IFIS…GAWI).

This sequence belongs to the sodium:solute symporter (SSF) (TC 2.A.21) family.

The protein resides in the cell inner membrane. The catalysed reaction is L-proline(in) + Na(+)(in) = L-proline(out) + Na(+)(out). Its function is as follows. Catalyzes the sodium-dependent uptake of extracellular L-proline. The polypeptide is Sodium/proline symporter (Klebsiella oxytoca).